A 376-amino-acid chain; its full sequence is MVKFSIEKKTILGRLGKIDSWGPVDVNHATPSCMTYLRAGHIPHLTWDVAENQLKLSQTPIYQMTLPSLISNAKIIEKFGKGVAKFVGMGALESPAIHLSPFDPLGKLPSGYNDSKSIAIWTANGKVSLDVKTYRNTVNSFGCGSFETLVDYDLPRDAGHKKLLKAVDRTTTFNEQIFKQDEKIDGERIVALGGGFSKYHRRKCAVDIGLAENTAAYTVEFHEFVEGMETDEMEMKELLEETFSPLPPTKLRCISGPFNPKTVLFLVQQGIDLFDSSFAIKLAEEGHAFCLADDYPTSSKYEVVDFKDQEKFADDFTPVFDGCGCYTCTKYTKGYLQHLLNTKELLASILLVIHNMSEYDRMFKLIRKSLENSEGL.

Residues cysteine 323, cysteine 325, cysteine 328, and histidine 354 each contribute to the Zn(2+) site.

Belongs to the queuine tRNA-ribosyltransferase family. QTRT2 subfamily. Heterodimer of a catalytic subunit and an accessory subunit. The cofactor is Zn(2+).

The protein localises to the cytoplasm. Functionally, non-catalytic subunit of the queuine tRNA-ribosyltransferase (TGT) that catalyzes the base-exchange of a guanine (G) residue with queuine (Q) at position 34 (anticodon wobble position) in tRNAs with GU(N) anticodons (tRNA-Asp, -Asn, -His and -Tyr), resulting in the hypermodified nucleoside queuosine (7-(((4,5-cis-dihydroxy-2-cyclopenten-1-yl)amino)methyl)-7-deazaguanosine). This is Queuine tRNA-ribosyltransferase accessory subunit 2 from Caenorhabditis briggsae.